Reading from the N-terminus, the 552-residue chain is Chaperonin GroEL (552 aa).

Residues 29–32 (TAGP), Lys50, 86–90 (DGTTT), Gly417, and Asp499 contribute to the ATP site.

This sequence belongs to the chaperonin (HSP60) family. In terms of assembly, forms a cylinder of 14 subunits composed of two heptameric rings stacked back-to-back. Interacts with the co-chaperonin GroES.

The protein resides in the cytoplasm. It catalyses the reaction ATP + H2O + a folded polypeptide = ADP + phosphate + an unfolded polypeptide.. Its function is as follows. Together with its co-chaperonin GroES, plays an essential role in assisting protein folding. The GroEL-GroES system forms a nano-cage that allows encapsulation of the non-native substrate proteins and provides a physical environment optimized to promote and accelerate protein folding. This is Chaperonin GroEL from Ehrlichia canis (strain Jake).